Reading from the N-terminus, the 329-residue chain is Phosphate import ATP-binding protein PstB (329 aa).

The region spanning 83 to 325 is the ABC transporter domain; sequence FEIRNFNFWY…PKQKATNSYI (243 aa). An ATP-binding site is contributed by 116 to 123; sequence GKSGCGKS.

The protein belongs to the ABC transporter superfamily. Phosphate importer (TC 3.A.1.7) family. As to quaternary structure, the complex is composed of two ATP-binding proteins (PstB), two transmembrane proteins (PstC and PstA) and a solute-binding protein (PstS).

Its subcellular location is the cell membrane. It carries out the reaction phosphate(out) + ATP + H2O = ADP + 2 phosphate(in) + H(+). Its function is as follows. Part of the ABC transporter complex PstSACB involved in phosphate import. Responsible for energy coupling to the transport system. This is Phosphate import ATP-binding protein PstB from Mycoplasma genitalium (strain ATCC 33530 / DSM 19775 / NCTC 10195 / G37) (Mycoplasmoides genitalium).